A 74-amino-acid chain; its full sequence is Kappa-scoloptoxin(07)-Ssm2d (74 aa).

Residues 1–19 form the signal peptide; sequence MLVFYALLFVTVFSNTVMG. Positions 20–41 are excised as a propeptide; the sequence is ATIDKPIPKPILREAIEEIEVN.

Belongs to the scoloptoxin-07 family. Contains 3 disulfide bonds. As to expression, expressed by the venom gland.

The protein resides in the secreted. Its function is as follows. Inhibits voltage-gated potassium channels. In Scolopendra mutilans (Chinese red-headed centipede), this protein is Kappa-scoloptoxin(07)-Ssm2d.